Reading from the N-terminus, the 155-residue chain is Transcription antitermination protein NusB (155 aa).

It belongs to the NusB family.

Its function is as follows. Involved in transcription antitermination. Required for transcription of ribosomal RNA (rRNA) genes. Binds specifically to the boxA antiterminator sequence of the ribosomal RNA (rrn) operons. This Aliivibrio fischeri (strain ATCC 700601 / ES114) (Vibrio fischeri) protein is Transcription antitermination protein NusB.